Consider the following 381-residue polypeptide: MNLHEYQAKELLRVAGVPIPPGEIATTPEQAEAIAKKLGTAVMVKAQVHAGGRGKAGGVKFCPTPEAAKEKATAILGMTIKDLTVEKVLVTVAADIASEAYVGIIVDRATKKPVFMVSAAGGIDIEEVAATTPEKILYHPVDTRYGLLPFEAMRMGFFLYQDVKLARQAAKIMQQLYTAFMSAGCSIAEINPLVVTPQNELIAVDGKMVIDDNELDRLPQIAALRDESSEAPSEVDARNANLTFIKLDGNVGCVVNGAGLAMATMDLVKYYGGDPANFLDIGGSSNPEKVVNALRIITADPNVKCILFNIFGGITRTDDVANGIVTATKANPLKVPIVIRLTGTNEELALQILKENGFSASSDMDSAVQRAVELATKGGAA.

The 228-residue stretch at 9 to 236 (KELLRVAGVP…ESSEAPSEVD (228 aa)) folds into the ATP-grasp domain. ATP contacts are provided by residues Lys-45, 52–54 (GRG), Ala-94, and Glu-99. Mg(2+) is bound by residues Asn-191 and Asp-205. Residues Asn-256 and 313–315 (GIT) contribute to the substrate site.

The protein belongs to the succinate/malate CoA ligase beta subunit family. As to quaternary structure, heterotetramer of two alpha and two beta subunits. Requires Mg(2+) as cofactor.

It carries out the reaction succinate + ATP + CoA = succinyl-CoA + ADP + phosphate. The catalysed reaction is GTP + succinate + CoA = succinyl-CoA + GDP + phosphate. The protein operates within carbohydrate metabolism; tricarboxylic acid cycle; succinate from succinyl-CoA (ligase route): step 1/1. Succinyl-CoA synthetase functions in the citric acid cycle (TCA), coupling the hydrolysis of succinyl-CoA to the synthesis of either ATP or GTP and thus represents the only step of substrate-level phosphorylation in the TCA. The beta subunit provides nucleotide specificity of the enzyme and binds the substrate succinate, while the binding sites for coenzyme A and phosphate are found in the alpha subunit. This chain is Succinate--CoA ligase [ADP-forming] subunit beta, found in Gemmatimonas aurantiaca (strain DSM 14586 / JCM 11422 / NBRC 100505 / T-27).